Here is a 159-residue protein sequence, read N- to C-terminus: Cyclin-dependent kinase inhibitor 1 (159 aa).

N-acetylserine is present on Ser2. Ser2 is covalently cross-linked (Glycyl serine ester (Ser-Gly) (interchain with G-Cter in ubiquitin)). The segment at 12–40 (HRSKVCRCLFGPVDSEQLRRDCDALMAGC) adopts a C4-type zinc-finger fold. Positions 17–24 (CRCLFGPV) are required for binding cyclins. The required for binding CDKs stretch occupies residues 53-58 (VTETPL). At Ser78 the chain carries Phosphoserine; by NUAK1. The interval 78 to 106 (SPGSRSRDDLGGDKRPSTSSALLQGPAPE) is disordered. Positions 82–93 (RSRDDLGGDKRP) are enriched in basic and acidic residues. Position 112 is a phosphoserine; by GSK3-beta (Ser112). Positions 118 to 142 (VSERPEDSPGGPGTSQGRKRRQTSL) are disordered. The residue at position 125 (Ser125) is a Phosphoserine. A PIP-box K+4 motif motif is present at residues 135–159 (RKRRQTSLTDFYHSKRRLVFCKRKP). Thr140 carries the phosphothreonine; by PKA, PKB/AKT1, PIM1 and PIM2 modification. Position 141 is a phosphoserine; by NUAK1 (Ser141). Residues 147–159 (HSKRRLVFCKRKP) form an interaction with TRIM39 region.

This sequence belongs to the CDI family. As to quaternary structure, interacts with HDAC1; the interaction is prevented by competitive binding of C10orf90/FATS to HDAC1 facilitating acetylation and protein stabilization of CDKN1A/p21. Interacts with MKRN1. Interacts with PSMA3. Interacts with PCNA. Component of the ternary complex, cyclin D-CDK4-CDKN1A. Interacts (via its N-terminal domain) with CDK4; the interaction promotes the assembly of the cyclin D-CDK4 complex, its nuclear translocation and promotes the cyclin D-dependent enzyme activity of CDK4. Binding to CDK2 leads to CDK2/cyclin E inactivation at the G1-S phase DNA damage checkpoint, thereby arresting cells at the G1-S transition during DNA repair. Interacts with PIM1. Interacts with STK11. Interacts with NUAK1. Interacts with DTL and TRIM39. Interacts with PKP3; the interaction sequesters CDKN1A to the cytoplasm thereby repressing its role as an inhibitor of CDK4- and CDK6-driven RB1 phosphorylation. Post-translationally, phosphorylation of Thr-140 or Ser-141 impairs binding to PCNA. Phosphorylation at Ser-112 by GSK3-beta enhances ubiquitination by the DCX(DTL) complex. Phosphorylation of Thr-140 by PIM2 enhances its stability and inhibits cell proliferation. Phosphorylation of Thr-140 by PIM1 results in the relocation of CDKN1A to the cytoplasm and enhanced CDKN1A protein stability. UV radiation-induced phosphorylation at Ser-78 and Ser-141 by NUAK1 leads to its degradation. In terms of processing, ubiquitinated by MKRN1; leading to polyubiquitination and 26S proteasome-dependent degradation. Ubiquitinated by the DCX(DTL) complex, also named CRL4(CDT2) complex, leading to its degradation during S phase or following UV irradiation. Ubiquitination by the DCX(DTL) complex is essential to control replication licensing and is PCNA-dependent: interacts with PCNA via its PIP-box, while the presence of the containing the 'K+4' motif in the PIP box, recruit the DCX(DTL) complex, leading to its degradation. Ubiquitination at Ser-2 leads to degradation by the proteasome pathway. Ubiquitinated by RNF114; leading to proteasomal degradation. Acetylation leads to protein stability. Acetylated in vitro on Lys-136, Lys-149, Lys-156 and Lys-158. Deacetylation by HDAC1 is prevented by competitive binding of C10orf90/FATS to HDAC1. As to expression, expressed in keratinocytes (at protein level).

The protein resides in the cytoplasm. It is found in the nucleus. In terms of biological role, may be involved in p53/TP53 mediated inhibition of cellular proliferation in response to DNA damage. Binds to and inhibits cyclin-dependent kinase activity, preventing phosphorylation of critical cyclin-dependent kinase substrates and blocking cell cycle progression. Functions in the nuclear localization and assembly of cyclin D-CDK4 complex and promotes its kinase activity towards RB1. At higher stoichiometric ratios, inhibits the kinase activity of the cyclin D-CDK4 complex. Inhibits DNA synthesis by DNA polymerase delta by competing with POLD3 for PCNA binding. Plays an important role in controlling cell cycle progression and DNA damage-induced G2 arrest. Its function is as follows. Plays an important role in controlling cell cycle progression and DNA damage-induced G2 arrest. Involved in p53/TP53 mediated inhibition of cellular proliferation in response to DNA damage. Also involved in p53-independent DNA damage-induced G2 arrest mediated by CREB3L1 in astrocytes and osteoblasts. Binds to and inhibits cyclin-dependent kinase activity, preventing phosphorylation of critical cyclin-dependent kinase substrates and blocking cell cycle progression. Functions in the nuclear localization and assembly of cyclin D-CDK4 complex and promotes its kinase activity towards RB1. At higher stoichiometric ratios, inhibits the kinase activity of the cyclin D-CDK4 complex. Inhibits DNA synthesis by DNA polymerase delta by competing with POLD3 for PCNA binding. Negatively regulates the CDK4- and CDK6-driven phosphorylation of RB1 in keratinocytes, thereby resulting in the release of E2F1 and subsequent transcription of E2F1-driven G1/S phase promoting genes. The protein is Cyclin-dependent kinase inhibitor 1 (Cdkn1a) of Mus musculus (Mouse).